We begin with the raw amino-acid sequence, 236 residues long: MKLLGHRKSHGHQRADASPDAGSKDGCRPDSGRTSGSDTSRGSQTTGPKGRPTPKRNQSRRHTKKGPVAPAPMTAAQARARRKSLAGPKLSREERRAEKAANRARMTERRERMMAGEEAYLLPRDRGPVRRYVRDVVDSRRNLLGLFMPSALTLLFVMFAVPQVQFYLSPAMLILLALMTIDAIILGRKVGRLVDTKFPSNTESRWRLGLYAAGRASQIRRLRAPRPQVERGGDVG.

Residues M1–H12 show a composition bias toward basic residues. Residues M1–E108 form a disordered region. Residues Q13–S31 are compositionally biased toward basic and acidic residues. The span at G32–G47 shows a compositional bias: low complexity. A compositionally biased stretch (basic residues) spans P52–K65. Residues P67–A78 are compositionally biased toward low complexity. Basic and acidic residues predominate over residues L90–E108. Transmembrane regions (helical) follow at residues N142–P162 and F166–L186.

The protein localises to the cell membrane. This is an uncharacterized protein from Mycobacterium tuberculosis (strain CDC 1551 / Oshkosh).